Here is a 509-residue protein sequence, read N- to C-terminus: Maturase K (509 aa).

The protein belongs to the intron maturase 2 family. MatK subfamily.

Its subcellular location is the plastid. The protein resides in the chloroplast. Functionally, usually encoded in the trnK tRNA gene intron. Probably assists in splicing its own and other chloroplast group II introns. In Vatairea macrocarpa, this protein is Maturase K.